The sequence spans 133 residues: Protransforming growth factor alpha (133 aa).

An N-terminal signal peptide occupies residues 1 to 23 (MVPSAGQLALFALGIFLAVCQAL). The propeptide at 24–38 (ENSTSALSDPPVAAA) is removed in mature form. Residues 24–97 (ENSTSALSDP…AVVAASQKKQ (74 aa)) are Extracellular-facing. The N-linked (GlcNAc...) asparagine glycan is linked to Asn-25. Residues 42–82 (HFNDCPDSHTQFCFHGTCRFLLQEEKPACVCHSGYVGARCE) enclose the EGF-like domain. Disulfide bonds link Cys-46–Cys-59, Cys-54–Cys-70, and Cys-72–Cys-81. The propeptide at 89-133 (VVAASQKKQAITALVVVTIVALAVLIITCVLIHCCEVRKHSVVVP) is removed in mature form. The chain crosses the membrane as a helical span at residues 98–120 (AITALVVVTIVALAVLIITCVLI). Topologically, residues 121 to 133 (HCCEVRKHSVVVP) are cytoplasmic.

Interacts with the PDZ domains of MAGI3, SDCBP and SNTA1. The interaction with SDCBP, is required for the targeting to the cell surface. In the endoplasmic reticulum, in its immature form (i.e. with a prosegment and lacking full N-glycosylation), interacts with CNIH. In the Golgi apparatus, may form a complex with CNIH and GORASP2. Interacts (via cytoplasmic C-terminal domain) with NKD2. As to expression, skin.

Its subcellular location is the secreted. The protein resides in the extracellular space. It localises to the cell membrane. TGF alpha is a mitogenic polypeptide that is able to bind to the EGF receptor/EGFR and to act synergistically with TGF beta to promote anchorage-independent cell proliferation in soft agar. The polypeptide is Protransforming growth factor alpha (TGFA) (Ovis aries (Sheep)).